The chain runs to 102 residues: Small ribosomal subunit protein uS10 (102 aa).

Belongs to the universal ribosomal protein uS10 family. Part of the 30S ribosomal subunit.

Involved in the binding of tRNA to the ribosomes. The chain is Small ribosomal subunit protein uS10 from Acidithiobacillus ferrooxidans (strain ATCC 53993 / BNL-5-31) (Leptospirillum ferrooxidans (ATCC 53993)).